A 93-amino-acid chain; its full sequence is Aspartyl/glutamyl-tRNA(Asn/Gln) amidotransferase subunit C (93 aa).

This sequence belongs to the GatC family. In terms of assembly, heterotrimer of A, B and C subunits.

The catalysed reaction is L-glutamyl-tRNA(Gln) + L-glutamine + ATP + H2O = L-glutaminyl-tRNA(Gln) + L-glutamate + ADP + phosphate + H(+). It carries out the reaction L-aspartyl-tRNA(Asn) + L-glutamine + ATP + H2O = L-asparaginyl-tRNA(Asn) + L-glutamate + ADP + phosphate + 2 H(+). Allows the formation of correctly charged Asn-tRNA(Asn) or Gln-tRNA(Gln) through the transamidation of misacylated Asp-tRNA(Asn) or Glu-tRNA(Gln) in organisms which lack either or both of asparaginyl-tRNA or glutaminyl-tRNA synthetases. The reaction takes place in the presence of glutamine and ATP through an activated phospho-Asp-tRNA(Asn) or phospho-Glu-tRNA(Gln). This chain is Aspartyl/glutamyl-tRNA(Asn/Gln) amidotransferase subunit C, found in Methanocella arvoryzae (strain DSM 22066 / NBRC 105507 / MRE50).